The chain runs to 337 residues: MTIQCSVCRNHVQSMYCAHCINTSPNLLHPLRMQLLMVQQKNKVLKGKVEDILSHALDKNWKSSDNDTEGIILADRLHKLEVLKRTKRNNRVRYRISQLTKRIENKQQRLQSLRLQITTTDVAKVSNANKKEIEEIRTKYLQLNEVVKREQELECQSLVDWFILRKRNSYEIPYTLVFLPVVSLKNFHKLPKAVTISSLHKMFQFLEIYSQIISFPLLYKGDEIKEKTINTDEEIAKLITKLVINVLQIGRFKNLIPKDAIDLVWLLDQYDVDSLFYNVIVNHKMECRVVLFHWTFGKVSKVVTETLQLPAGSTTSFPRQQVGDTYDKDDDMWHIVG.

Positions 5-20 (CSVCRNHVQSMYCAHC) are cysteine repeats. The stretch at 87–153 (KRNNRVRYRI…NEVVKREQEL (67 aa)) forms a coiled coil.

The protein belongs to the ATG14 family.

Its subcellular location is the preautophagosomal structure membrane. The protein resides in the vacuole membrane. Its function is as follows. Required for cytoplasm to vacuole transport (Cvt) and autophagy as a part of the autophagy-specific VPS34 PI3-kinase complex I. This complex is essential to recruit the ATG8-phosphatidylinositol conjugate and the ATG12-ATG5 conjugate to the pre-autophagosomal structure. ATG14 mediates the specific binding of the VPS34 PI3-kinase complex I to the preautophagosomal structure (PAS). This Vanderwaltozyma polyspora (strain ATCC 22028 / DSM 70294 / BCRC 21397 / CBS 2163 / NBRC 10782 / NRRL Y-8283 / UCD 57-17) (Kluyveromyces polysporus) protein is Autophagy-related protein 14 (ATG14).